Here is a 387-residue protein sequence, read N- to C-terminus: Krueppel-like factor 17 (387 aa).

Disordered regions lie at residues 28–54, 213–234, and 257–277; these read FLDM…IRRV, SRDP…PLES, and RREA…SPVS. Positions 30 to 46 are enriched in polar residues; that stretch reads DMSSSPGSGGVHTSWNR. The segment covering 257 to 270 has biased composition (basic and acidic residues); sequence RREAQNSRAQERAS. 3 C2H2-type zinc fingers span residues 280 to 304, 310 to 334, and 340 to 362; these read YHCE…QRKH, YKCT…TRIH, and HKCD…QRTH. The tract at residues 357 to 387 is disordered; the sequence is QHQRTHMRMPRSPDPQADSGRRAGPLPAPHL.

It belongs to the Sp1 C2H2-type zinc-finger protein family.

The protein resides in the nucleus. Transcription repressor that binds to the promoter of target genes and prevents their expression. Acts as a negative regulator of epithelial-mesenchymal transition and metastasis in breast cancer. Specifically binds the 5'-CACCC-3' sequence in the promoter of ID1, a key metastasis regulator in breast cancer, and repress its expression. May be a germ cell-specific transcription factor that plays important roles in spermatid differentiation and oocyte development. The chain is Krueppel-like factor 17 (KLF17) from Sus scrofa (Pig).